Here is a 143-residue protein sequence, read N- to C-terminus: Transcription antitermination protein NusB (143 aa).

This sequence belongs to the NusB family.

Involved in transcription antitermination. Required for transcription of ribosomal RNA (rRNA) genes. Binds specifically to the boxA antiterminator sequence of the ribosomal RNA (rrn) operons. The sequence is that of Transcription antitermination protein NusB from Streptomyces griseus subsp. griseus (strain JCM 4626 / CBS 651.72 / NBRC 13350 / KCC S-0626 / ISP 5235).